The chain runs to 3550 residues: METCDSPPISRQENGQSTSKLCGMTQLDNEVPEKVAGIEPDRENSSSHDNLKTDERKSEVLLGFSIENAAATQVTSAKEIPCNECATSFPSLQKYMEHHCPNARLPVLKDDESETSELEDSDVENLTGEIVYQPDGSAYIIEDSKESGQNAQTGANSKLFSTAMFLDSLASAGEKSDQSSTAPVSFYPQIINTFHIASSLGKPFTADPAFPNTSALAGVGPVLHSFRVYDLRHKREKDYLTSDGSAKNSCVSKDVPNNVDLSKFDGCVSDGKRKPVLMCFLCKLSFGYIRSFVTHAVHDHRMTLNDEERRLLSNKCVSAIIQGIGKDKEPLISFLEPKKSTSVYPNFSTTNLIGPDPTFRGLWSAFHVENGDSLQAGFAFLKGSASPSSSAEQPLGITHMPKAEVNLGGLSSLVVNTPITSVSLSHLSSESSKMSESKDQENNCERPKESTILHPNVGCPVKSEPTEPGDEDEEDAYSNELDDEEVLGELTDSIGNKDFPLLNQSISPLSSSVLKFIEKGTSSSSGTIAEDTEKKKQAAATGRSNGNVTNSYSIGGKDFADGSISRDGTTAAPSETTHGDEDSSTTHQHGFTPSTPGTPGPGGDGSPGNGIECPKCDTVLGSSRSLGGHMTMMHSRNSCKTLKCPKCNWHYKYQQTLEAHMKEKHPEPGGSCVYCKTGQPHPRLARGESYTRGYKPFRCEVCNYSTTTKGNLSIHMQSDKHLNNVQNLQNGNGEQVFGHSAPTPNTSLSGCGTPSPSKPKQKPTRRCEVCDYETNVARNLRIHMTSEKHMHNMMLLQQNMKQIQHNLHLGLAPAEAELYQYYLAQNIGLTGMKLENPAETQLLLNPFQFDSATAAALAPGLGELSPYISDPALKLFQCAVCNKFTSDSLEALSVHVNSERSLPEEEWRAVIGDIYQCKLCNYNTQLKANFQLHCKTDKHMQKYQLVAHIKEGGKSNEWRLKCIAIGNPVHLKCNACDYYTNSVDKLRLHTTNHRHEAALKLYKHLQKQEGAVNSESCCYYCAVCDYSSKIKLNLVQHVRSVKHQQTEGLRKLQLHQQGLPSEEDNLSEIFFVKECPANELETASLGARNGEDELIEQQLKAASEEPSEDAGDPLKPPTVAEDDEKEAHKRDNSEGKISTKDPEVIVPEKEPKVVTGATQPLLLAKEDSTGTKRSKPTEDNKFCPEQFYQYPCCNYNSRDQSRIQMHVLSQHSVQPVICCPLCQDVLSNKMHLQLHLTHLHSVSPDCVEKLLMTVPVPDVMMLNSMLLPAAAPEKSEQDPPTALTAEGSGKCSGDGPVDDKSMSGLEDSKVGVEIKNEEQKPAKEPVEASEWNKTSSKDVNISDALQDQLNEQQKRQPLSVSDRHVYKYRCNHCSLAFKTMQKLQIHSQYHAIRAATMCTLCQRSFRTFQALKKHLEAGHPELSEAELQQLYASLPMNGELWAESETMTQDDHGIDQEMEREYEVDHEGKASPVESDGSSIPDDLGLEPKRTLPFRKGPNFTMEKFLDPSRPYKCTVCKESFTQKNILLVHYNSVSHLHKLKKVLQEASSPVPQEANSSTDNKPYKCSTCSVAYSQSSTLEIHMRSVLHQTKARAAKLEPSRHLPSGHSITAAVNSPGQGMLESMSLASVNSKDTHLDAKELNKKQTPELISAQPTHHPPPRSPAQIQMQLQHELQQQAAFFQPQFLNPAFLPHFPMTPEALLQFQQPQFLFPFYIPGAEFSLGPDLGLPTSTTFGVPGMTGMAGSLLEDLKQQIQTQHHVGQTQLQFLQQAQQYQAVQPQLQPQNQQPPLPQQQQPQQQPSKLLKQEQGSLASTDCQLMKDMPSYKEAEEVTEKQEKPKQEFINDTEGLKDSKDIKKQKSLEPCIPPPRIASGARGNAAKALLENFGFELVIQYNENRQKVQKKGKSGEGENSDKLECGICGKLFSNVLILKSHQEHVHGQFFPYGALEKFARQYREAYDKLIQFLLPPLPPAPPQPSTLGPVKIPNTVSAPLQAPPPTPPSAPQQVQLPVSLDLPLFPSIMMQPVQHPALPPQLALQLPQMDTLSADLTQLCQQQLGIDPNFLRHSQFKRPRTRITDDQLKILRAYFDINNSPSEEQIQEMAEKSGLSQKVVKHWFRNTLFKERQRNKDSPYNFSNPPITVLEDIRIDPQPTSLEHYKSDAAFSKRSSRTRFTDYQLRVLQDFFDTNAYPKDDEIEQLSTVLNLPTRVIVVWFQNARQKARKSYENQAEAKDNEKRELTNERYIRTSNMQYQCKKCNVVFPRIFDLITHQKKQCYKDEDDDAQDESQTEDSMDATDQVLYKHCMVSGQTDTAKSTATLVASSGSGTSTPLIPSPKPEPEKNSPKTEYPGEKTKQSDPSLPQGTKSAPSSVLTSSEPQQASIPQPPTQPPKQPQLIGRPPSASQTPIPSSPLQISMTSLQNSLPPQLLQYPCDQCTLAFPTLELWKEHQHMHFLAAQNQFLHSPFLERPMDMPYMIFDPNNPLMTGQLLGSSLTQMPPQTSTAHTTAPASVAASLKRKLEDKEDNNCSEKEGGNSGEDQHRDKRLRTTITPEQLEILYEKYLLDSNPTRKMLDHIAREVGLKKRVVQVWFQNTRARERKGQFRAVGPAQSHKRCPFCRALFKAKSALESHIRSRHWNEGKQAGYSLPPSPLISTEDGGESPQKYIYFDYPSLPLTKIDLSTENELASTVSTPVSKTAELSPKNLLSPSSFKAECPEDVENLNAPSADAGYDQSKTDFDETSSINTAISDATTGDEGAADMENTGGSGEVKPALSPKETKTLDSLQKPATTPTTEVCDDKFLFSLTSPSIHFNDKDGDHDQSFYITDDPDDNADRSETSSIADPSSPNPFGSSNPFKSKSNDRPGHKRFRTQMSNLQLKVLKACFSDYRTPTMQECEMLGNEIGLPKRVVQVWFQNARAKERKFKINIGKPFMINQSGTDGTKPECTLCGVKYSARLSIRDHIFSKQHISKVRETVGSQLDREKDYLAPTTVRQLMAQQELDRIKKASDVLGLTVQQQGITDNCSLHGISLQAAYPGLPGLPPVILPGMNGPSSLPGFPQNSNTLTSPGTGMLGFPSSATSSPALSLSSGPTKSLLQTPPPPPPPPPPPSSLSGQQTEPQNKESEKKQTKPNKVKKIKEEESEAIKPEKHPKKEEKISSALTVLGKVVGETHMDPTQLQALQNAIAGDPASFIGGQFLPYFIPGFASYFSPQLPGTVQGGYLPPICGVESLFPYGPAVPQTLAGLSPGALLQQYQQYQQSLQDSLQKQQKQQQEQQQKPVPAKTAKGEGDQPQSSNEASETKEEKSTAPESTKEEVQLDSKSAEFSDTCIVPFVKYEFVCRKCQMMFTDEDATVNHQKSFCYFGQPLIDPQETVLRIPVSKYQCLACDLALSGNEALSQHLQSSLHKEKTIKQAMRNAKEHVRLLPHSVCSPPPNTSSTSPSAASSNNTYPHLSCFSMKSWPNILFQASARKAASSPSSPPSLSLPSTVTSSLCSTSGVQTSLPTESCSDESDSELSQKLQDLDNSLEVKAKPASGLDGNFNSVRMDMFSV.

Met-1 carries the N-acetylmethionine modification. Disordered regions lie at residues Met-1 to Asp-54, His-426 to Asn-479, and Thr-521 to Pro-614. Over residues Ile-9–Lys-20 the composition is skewed to polar residues. Basic and acidic residues-rich tracts occupy residues Glu-39–Asp-54 and Lys-433–Thr-451. Over residues Glu-467–Asn-479 the composition is skewed to acidic residues. Composition is skewed to polar residues over residues Gly-542–Ser-553 and Arg-566–Thr-576. C2H2-type zinc fingers lie at residues Ile-611–His-634, Leu-642–His-665, and Phe-697–His-721. Positions His-739–Pro-763 are disordered. Positions Pro-742–Gly-752 are enriched in polar residues. 4 C2H2-type zinc fingers span residues Arg-765–Glu-787, Tyr-915–His-939, Leu-971–His-993, and Tyr-1019–His-1043. The segment at Lys-1100 to Pro-1142 is disordered. Basic and acidic residues predominate over residues Lys-1125–Pro-1142. A Glycyl lysine isopeptide (Lys-Gly) (interchain with G-Cter in SUMO2) cross-link involves residue Lys-1165. C2H2-type zinc fingers lie at residues Tyr-1188–His-1211 and Ile-1217–His-1240. The segment at Ala-1271–Val-1339 is disordered. Basic and acidic residues predominate over residues Val-1297 to Val-1326. Residue Lys-1315 forms a Glycyl lysine isopeptide (Lys-Gly) (interchain with G-Cter in SUMO2) linkage. C2H2-type zinc fingers lie at residues Tyr-1368–His-1390 and Thr-1396–His-1419. Positions Glu-1467 to Leu-1492 are disordered. A C2H2-type 12 zinc finger spans residues Tyr-1512 to His-1538. Residue Lys-1562 forms a Glycyl lysine isopeptide (Lys-Gly) (interchain with G-Cter in SUMO2) linkage. A C2H2-type 13 zinc finger spans residues Tyr-1564–His-1588. Positions Pro-1779–Gly-1873 are disordered. A compositionally biased stretch (low complexity) spans Gln-1792 to Gln-1808. Lys-1805 is covalently cross-linked (Glycyl lysine isopeptide (Lys-Gly) (interchain with G-Cter in SUMO2)). Residues Pro-1823–Ser-1860 show a composition bias toward basic and acidic residues. Residues Leu-1916–His-1939 form a C2H2-type 14 zinc finger. The segment at Lys-1984–Gln-2006 is disordered. Residues Gln-1994–Ala-2003 are compositionally biased toward pro residues. DNA-binding regions (homeobox) lie at residues Phe-2069–Asn-2128 and Lys-2166–Tyr-2225. The C2H2-type 15; degenerate zinc-finger motif lies at Tyr-2252 to Tyr-2276. Over residues Thr-2318–Leu-2331 the composition is skewed to polar residues. The disordered stretch occupies residues Thr-2318–Leu-2412. Residues Pro-2337–Gln-2355 show a composition bias toward basic and acidic residues. Residues Ser-2356–Glu-2376 are compositionally biased toward polar residues. A compositionally biased stretch (pro residues) spans Pro-2383–Gln-2392. Polar residues predominate over residues Ser-2401–Leu-2412. A C2H2-type 16 zinc finger spans residues Tyr-2430–His-2452. Polar residues predominate over residues Gly-2490 to Pro-2508. Residues Gly-2490–Leu-2545 form a disordered region. The span at Arg-2517–Arg-2541 shows a compositional bias: basic and acidic residues. The segment at residues Asp-2542–Gln-2601 is a DNA-binding region (homeobox 3). The C2H2-type 17 zinc finger occupies Lys-2612–His-2635. The residue at position 2645 (Ser-2645) is a Phosphoserine. 2 disordered regions span residues Ala-2746–Pro-2791 and His-2810–Lys-2866. Polar residues predominate over residues Leu-2781 to Pro-2791. Positions Phe-2811–Gln-2820 are enriched in basic and acidic residues. The span at Pro-2843–Phe-2855 shows a compositional bias: low complexity. Positions His-2865–Lys-2924 form a DNA-binding region, homeobox 4. The C2H2-type 18 zinc-finger motif lies at Pro-2943–His-2967. 2 disordered regions span residues Pro-3051–Ile-3156 and Gln-3261–Asp-3318. Positions Pro-3058–Gly-3068 are enriched in polar residues. Residues Pro-3075 to Ser-3088 show a composition bias toward low complexity. Residues Thr-3097 to Ser-3109 are compositionally biased toward pro residues. The segment covering Ile-3136–Ile-3156 has biased composition (basic and acidic residues). Lys-3137 is covalently cross-linked (Glycyl lysine isopeptide (Lys-Gly) (interchain with G-Cter in SUMO2)). Positions Ala-3248–Lys-3277 form a coiled coil. Residues Gln-3261–Gln-3276 show a composition bias toward low complexity. Basic and acidic residues predominate over residues Ser-3298–Asp-3318. The segment at Phe-3337 to Tyr-3361 adopts a C2H2-type 19; degenerate zinc-finger fold. The segment at Tyr-3381–His-3405 adopts a C2H2-type 20 zinc-finger fold. Residues Leu-3424–Ser-3445 are disordered. A compositionally biased stretch (low complexity) spans Thr-3435 to Ser-3445.

Belongs to the krueppel C2H2-type zinc-finger protein family. Expressed in brain, heart, lung, muscle and small intestine. No expression detected in undifferentiated P19 cells, however, expression was seen following retinoic acid treatment to induce neuronal differentiation. Expressed in undifferentiated C2C12 cells, following induction of muscle differentiation in a low-serum medium, expression levels were decreased.

It is found in the nucleus. Its function is as follows. May play a role in neural and muscle differentiation. May be involved in transcriptional regulation. This is Zinc finger homeobox protein 4 (Zfhx4) from Mus musculus (Mouse).